A 152-amino-acid polypeptide reads, in one-letter code: Small heat shock protein HspA (152 aa).

The sHSP domain occupies 29–139; it reads TAGEANYPPC…KPRRIPIDNL (111 aa).

This sequence belongs to the small heat shock protein (HSP20) family.

The protein is Small heat shock protein HspA (hspA) of Bradyrhizobium diazoefficiens (strain JCM 10833 / BCRC 13528 / IAM 13628 / NBRC 14792 / USDA 110).